The primary structure comprises 152 residues: UPF0178 protein CKL_3490 (152 aa).

This sequence belongs to the UPF0178 family.

The chain is UPF0178 protein CKL_3490 from Clostridium kluyveri (strain ATCC 8527 / DSM 555 / NBRC 12016 / NCIMB 10680 / K1).